A 288-amino-acid chain; its full sequence is Eukaryotic translation initiation factor 3 subunit G (288 aa).

The segment at 1–33 is disordered; the sequence is MSRVANNRDWADDEDLEDSNELPQSTTTTNKDG. Residues 11-20 show a composition bias toward acidic residues; sequence ADDEDLEDSN. A compositionally biased stretch (polar residues) spans 21-33; sequence ELPQSTTTTNKDG. The RRM domain occupies 208–286; the sequence is ATLRVTNVSE…LILRVEFAKK (79 aa).

The protein belongs to the eIF-3 subunit G family. Component of the eukaryotic translation initiation factor 3 (eIF-3) complex.

The protein resides in the cytoplasm. Its function is as follows. RNA-binding component of the eukaryotic translation initiation factor 3 (eIF-3) complex, which is involved in protein synthesis of a specialized repertoire of mRNAs and, together with other initiation factors, stimulates binding of mRNA and methionyl-tRNAi to the 40S ribosome. The eIF-3 complex specifically targets and initiates translation of a subset of mRNAs involved in cell proliferation. This subunit can bind 18S rRNA. The sequence is that of Eukaryotic translation initiation factor 3 subunit G (tif35) from Sclerotinia sclerotiorum (strain ATCC 18683 / 1980 / Ss-1) (White mold).